A 224-amino-acid chain; its full sequence is C-reactive protein (224 aa).

A signal peptide spans 1-18 (MEKLLCFLVLTSLSHAFG). Glutamine 19 is subject to Pyrrolidone carboxylic acid. The region spanning 23–224 (SRKAFVFPKE…EVFTKPQLWP (202 aa)) is the Pentraxin (PTX) domain. Cysteine 54 and cysteine 115 are joined by a disulfide. Ca(2+)-binding residues include aspartate 78, asparagine 79, glutamate 156, glutamine 157, aspartate 158, and glutamine 168.

It belongs to the pentraxin family. As to quaternary structure, homopentamer. Pentraxin (or pentaxin) have a discoid arrangement of 5 non-covalently bound subunits. Interacts with FCN1; may regulate monocyte activation by FCN1. Ca(2+) serves as cofactor. Found in plasma.

The protein resides in the secreted. In terms of biological role, displays several functions associated with host defense: it promotes agglutination, bacterial capsular swelling, phagocytosis and complement fixation through its calcium-dependent binding to phosphorylcholine. Can interact with DNA and histones and may scavenge nuclear material released from damaged circulating cells. The chain is C-reactive protein (CRP) from Homo sapiens (Human).